An 872-amino-acid polypeptide reads, in one-letter code: Paladin (872 aa).

Positions 1 to 37 (MGTTASAAQQVPSTVPSSENVQGNGSGSSNVEDRNSL) are disordered. Residue G2 is the site of N-myristoyl glycine attachment. A coiled-coil region spans residues 186-210 (RRKENLHENLHDLEKGLRAENLELA).

It belongs to the paladin family.

The protein resides in the cytoplasm. The protein localises to the cytosol. This Xenopus tropicalis (Western clawed frog) protein is Paladin (pald1).